A 581-amino-acid chain; its full sequence is Threonine--tRNA ligase (581 aa).

The catalytic stretch occupies residues 185 to 478 (DHRKLGKELD…LVEHYGGAFP (294 aa)). Zn(2+)-binding residues include C278, H329, and H455.

The protein belongs to the class-II aminoacyl-tRNA synthetase family. In terms of assembly, homodimer. Zn(2+) is required as a cofactor.

It localises to the cytoplasm. The catalysed reaction is tRNA(Thr) + L-threonine + ATP = L-threonyl-tRNA(Thr) + AMP + diphosphate + H(+). Catalyzes the attachment of threonine to tRNA(Thr) in a two-step reaction: L-threonine is first activated by ATP to form Thr-AMP and then transferred to the acceptor end of tRNA(Thr). Also edits incorrectly charged L-seryl-tRNA(Thr). This Borreliella burgdorferi (strain ATCC 35210 / DSM 4680 / CIP 102532 / B31) (Borrelia burgdorferi) protein is Threonine--tRNA ligase.